Here is a 193-residue protein sequence, read N- to C-terminus: Ribose 1,5-bisphosphate phosphokinase PhnN (193 aa).

Residue 9 to 16 coordinates ATP; that stretch reads GPSGAGKD.

It belongs to the ribose 1,5-bisphosphokinase family.

It catalyses the reaction alpha-D-ribose 1,5-bisphosphate + ATP = 5-phospho-alpha-D-ribose 1-diphosphate + ADP. It participates in metabolic intermediate biosynthesis; 5-phospho-alpha-D-ribose 1-diphosphate biosynthesis; 5-phospho-alpha-D-ribose 1-diphosphate from D-ribose 5-phosphate (route II): step 3/3. Catalyzes the phosphorylation of ribose 1,5-bisphosphate to 5-phospho-D-ribosyl alpha-1-diphosphate (PRPP). This is Ribose 1,5-bisphosphate phosphokinase PhnN from Yersinia pestis.